Reading from the N-terminus, the 522-residue chain is Phosphatidylinositol 3,4,5-trisphosphate 3-phosphatase TPTE2 (522 aa).

Over residues Met-1–Lys-11 the composition is skewed to polar residues. Positions Met-1 to Phe-28 are disordered. Residues Gly-12–Glu-27 show a composition bias toward basic and acidic residues. The next 3 helical transmembrane spans lie at Ile-66–Leu-86, Ile-111–Gly-131, and Ala-146–Leu-166. In terms of domain architecture, Phosphatase tensin-type spans Arg-210–Tyr-386. The Phosphocysteine intermediate role is filled by Cys-320. The C2 tensin-type domain maps to Arg-393–Lys-522.

In terms of tissue distribution, isoform 3 is expressed in testis, brain and stomach while isoform 4 seems to be testis-specific.

The protein localises to the endoplasmic reticulum membrane. Its subcellular location is the golgi apparatus membrane. It localises to the cytoplasm. The enzyme catalyses a 1,2-diacyl-sn-glycero-3-phospho-(1D-myo-inositol-3,4,5-trisphosphate) + H2O = a 1,2-diacyl-sn-glycero-3-phospho-(1D-myo-inositol-4,5-bisphosphate) + phosphate. Acts as a lipid phosphatase, removing the phosphate in the D3 position of the inositol ring from phosphatidylinositol 3,4,5-trisphosphate. Its function is as follows. Shows no phosphoinositide phosphatase activity. This Homo sapiens (Human) protein is Phosphatidylinositol 3,4,5-trisphosphate 3-phosphatase TPTE2 (TPTE2).